We begin with the raw amino-acid sequence, 76 residues long: Alpha/kappa-conotoxin pl14a (76 aa).

The first 24 residues, 1 to 24, serve as a signal peptide directing secretion; it reads MPSVRSVTCCCLLWMMFSVQLVTP. A propeptide spanning residues 25 to 39 is cleaved from the precursor; sequence GSPGTAQLSGHRTAR. 2 cysteine pairs are disulfide-bonded: C46-C61 and C50-C63. R64 is modified (arginine amide). Positions 65 to 76 are excised as a propeptide; that stretch reads GKRDAVSSSMAV.

It belongs to the conotoxin J superfamily. In terms of tissue distribution, expressed by the venom duct.

It localises to the secreted. Highly inhibits both nicotinic acetylcholine receptors (neuronal (IC(50)=8.7 uM for alpha-3/beta-4) and muscular (IC(50)=0.54 uM for alpha-1-beta-1-epsilon-delta (CHRNA1-CHRNB1-CHRND-CHRNE)) subtypes) and the voltage-gated potassium channel Kv1.6/KCNA6 subtype (IC(50)=1.59 uM). This chain is Alpha/kappa-conotoxin pl14a, found in Conus planorbis (Planorbis cone).